A 419-amino-acid polypeptide reads, in one-letter code: Glutamyl-tRNA reductase (419 aa).

Residues 50–53, Ser108, 113–115, and Gln119 contribute to the substrate site; these read TCNR and ETQ. The active-site Nucleophile is the Cys51. 188-193 contacts NADP(+); that stretch reads GAGEMI.

The protein belongs to the glutamyl-tRNA reductase family. As to quaternary structure, homodimer.

It carries out the reaction (S)-4-amino-5-oxopentanoate + tRNA(Glu) + NADP(+) = L-glutamyl-tRNA(Glu) + NADPH + H(+). The protein operates within porphyrin-containing compound metabolism; protoporphyrin-IX biosynthesis; 5-aminolevulinate from L-glutamyl-tRNA(Glu): step 1/2. In terms of biological role, catalyzes the NADPH-dependent reduction of glutamyl-tRNA(Glu) to glutamate 1-semialdehyde (GSA). The polypeptide is Glutamyl-tRNA reductase (Albidiferax ferrireducens (strain ATCC BAA-621 / DSM 15236 / T118) (Rhodoferax ferrireducens)).